A 68-amino-acid polypeptide reads, in one-letter code: MNIINKIFGIQYIKVTYKVTDKNPYTDEHEEPQVESIILEKDPNWPVEFRLPCYGHWADVEIISIENV.

This is an uncharacterized protein from Enterobacteria phage T4 (Bacteriophage T4).